A 336-amino-acid polypeptide reads, in one-letter code: Dihydroorotate dehydrogenase (quinone) (336 aa).

Residues 62 to 66 (AGLDK) and threonine 86 each bind FMN. Lysine 66 lines the substrate pocket. 111–115 (NRMGF) is a binding site for substrate. FMN contacts are provided by asparagine 139 and asparagine 172. Residue asparagine 172 participates in substrate binding. Serine 175 serves as the catalytic Nucleophile. Asparagine 177 contributes to the substrate binding site. FMN contacts are provided by lysine 217 and threonine 245. 246-247 (NT) contacts substrate. FMN is bound by residues glycine 268, glycine 297, and 318–319 (YS).

This sequence belongs to the dihydroorotate dehydrogenase family. Type 2 subfamily. As to quaternary structure, monomer. Requires FMN as cofactor.

The protein localises to the cell membrane. It catalyses the reaction (S)-dihydroorotate + a quinone = orotate + a quinol. It participates in pyrimidine metabolism; UMP biosynthesis via de novo pathway; orotate from (S)-dihydroorotate (quinone route): step 1/1. Catalyzes the conversion of dihydroorotate to orotate with quinone as electron acceptor. This chain is Dihydroorotate dehydrogenase (quinone), found in Salmonella agona (strain SL483).